The primary structure comprises 623 residues: Frizzled and smoothened-like protein M (623 aa).

The signal sequence occupies residues 1 to 18; that stretch reads MKSIFIIIFILYVFQVNS. Over 19–243 the chain is Extracellular; the sequence is QTIYPIDPSG…WDQLYNLSNT (225 aa). Residues 25-163 form the FZ domain; it reads DPSGKCEQYI…NYSEFNLTNY (139 aa). 2 disulfides stabilise this stretch: cysteine 30/cysteine 100 and cysteine 42/cysteine 93. N-linked (GlcNAc...) asparagine glycans are attached at residues asparagine 57, asparagine 106, asparagine 109, asparagine 154, asparagine 159, asparagine 169, asparagine 199, and asparagine 239. The chain crosses the membrane as a helical span at residues 244–264; that stretch reads LAVLSTFGSLYLLVTFIILNP. Residues 265–273 are Cytoplasmic-facing; sequence KVTSFDRMY. The helical transmembrane segment at 274–294 threads the bilayer; it reads GFFNGSVFMMSLSGVILFIAG. Over 295-317 the chain is Extracellular; it reads GPRALIKDGGARISVFEDPLCSS. Residues 318-338 form a helical membrane-spanning segment; it reads TGFIFQLFAINAILFWAYMGF. Residues 339–354 are Cytoplasmic-facing; the sequence is DLWWRVKYITKPLNIQ. Residues 355–375 form a helical membrane-spanning segment; the sequence is KYYVPIAFTISFIFSVIPLAT. The Extracellular segment spans residues 376-397; the sequence is KNYRMVRGNIHCWVHKAVLQNT. The helical transmembrane segment at 398-418 threads the bilayer; the sequence is LFFGPLGLTLTISTGFIGLVI. Over 419–439 the chain is Cytoplasmic; sequence YEIYKIVKATGRGGIMKLEIK. Residues 440–460 traverse the membrane as a helical segment; sequence PILNIVLIYFSFVYIFAFNFH. Over 461 to 494 the chain is Extracellular; it reads NDNNSKNTYGSIDEFFQCTLESDDPSKCTVGGPS. Asparagine 463 carries N-linked (GlcNAc...) asparagine glycosylation. The helical transmembrane segment at 495–515 threads the bilayer; it reads IGSLGYFIYCIRIYGIYCFFL. Over 516–623 the chain is Cytoplasmic; it reads QGLNERAFKI…DIEIGSVNIK (108 aa). The disordered stretch occupies residues 552-590; it reads PSESGNSSTTAGTSTTINNSNINKKNNNSKPTLSTMDSN. The span at 555-580 shows a compositional bias: low complexity; the sequence is SGNSSTTAGTSTTINNSNINKKNNNS.

This sequence belongs to the G-protein coupled receptor Fz/Smo family.

Its subcellular location is the membrane. The chain is Frizzled and smoothened-like protein M (fslM-1) from Dictyostelium discoideum (Social amoeba).